The sequence spans 562 residues: Arginine--tRNA ligase (562 aa).

Positions Pro-122–His-132 match the 'HIGH' region motif.

It belongs to the class-I aminoacyl-tRNA synthetase family. As to quaternary structure, monomer.

Its subcellular location is the cytoplasm. The enzyme catalyses tRNA(Arg) + L-arginine + ATP = L-arginyl-tRNA(Arg) + AMP + diphosphate. This is Arginine--tRNA ligase from Chlamydia abortus (strain DSM 27085 / S26/3) (Chlamydophila abortus).